The following is a 159-amino-acid chain: Putative pre-16S rRNA nuclease (159 aa).

The protein belongs to the YqgF nuclease family.

It localises to the cytoplasm. Could be a nuclease involved in processing of the 5'-end of pre-16S rRNA. This Thermobifida fusca (strain YX) protein is Putative pre-16S rRNA nuclease.